The chain runs to 287 residues: S-methyl-5'-thioadenosine phosphorylase (287 aa).

Phosphate-binding positions include T13 and 55-56 (RH). Substrate is bound at residue M186. T187 is a phosphate binding site. Position 210–212 (210–212 (DYD)) interacts with substrate.

It belongs to the PNP/MTAP phosphorylase family. MTAP subfamily. In terms of assembly, homohexamer. Dimer of a homotrimer.

It catalyses the reaction S-methyl-5'-thioadenosine + phosphate = 5-(methylsulfanyl)-alpha-D-ribose 1-phosphate + adenine. It participates in amino-acid biosynthesis; L-methionine biosynthesis via salvage pathway; S-methyl-5-thio-alpha-D-ribose 1-phosphate from S-methyl-5'-thioadenosine (phosphorylase route): step 1/1. Its function is as follows. Catalyzes the reversible phosphorylation of S-methyl-5'-thioadenosine (MTA) to adenine and 5-methylthioribose-1-phosphate. Involved in the breakdown of MTA, a major by-product of polyamine biosynthesis. Responsible for the first step in the methionine salvage pathway after MTA has been generated from S-adenosylmethionine. Has broad substrate specificity with 6-aminopurine nucleosides as preferred substrates. The sequence is that of S-methyl-5'-thioadenosine phosphorylase from Leptospira interrogans serogroup Icterohaemorrhagiae serovar copenhageni (strain Fiocruz L1-130).